The sequence spans 220 residues: UPF0758 protein APL_1970 (220 aa).

The region spanning 98 to 220 (NINEPYLAVM…YFSFEEEKFR (123 aa)) is the MPN domain. Positions 169, 171, and 182 each coordinate Zn(2+). Positions 169–182 (HNHPSGNCTPSESD) match the JAMM motif motif.

The protein belongs to the UPF0758 family.

The chain is UPF0758 protein APL_1970 from Actinobacillus pleuropneumoniae serotype 5b (strain L20).